The chain runs to 117 residues: Small ribosomal subunit protein bS6 (117 aa).

The tract at residues 96-117 (HDEGPSVQMQKRDEREGRRERR) is disordered.

This sequence belongs to the bacterial ribosomal protein bS6 family.

In terms of biological role, binds together with bS18 to 16S ribosomal RNA. The polypeptide is Small ribosomal subunit protein bS6 (Jannaschia sp. (strain CCS1)).